The primary structure comprises 366 residues: Ribosomal RNA large subunit methyltransferase M (366 aa).

S-adenosyl-L-methionine is bound by residues serine 188, 221 to 224 (CPGG), aspartate 240, aspartate 260, and aspartate 277. The Proton acceptor role is filled by lysine 306.

It belongs to the class I-like SAM-binding methyltransferase superfamily. RNA methyltransferase RlmE family. RlmM subfamily. Monomer.

It localises to the cytoplasm. The enzyme catalyses cytidine(2498) in 23S rRNA + S-adenosyl-L-methionine = 2'-O-methylcytidine(2498) in 23S rRNA + S-adenosyl-L-homocysteine + H(+). In terms of biological role, catalyzes the 2'-O-methylation at nucleotide C2498 in 23S rRNA. This chain is Ribosomal RNA large subunit methyltransferase M, found in Klebsiella pneumoniae subsp. pneumoniae (strain ATCC 700721 / MGH 78578).